Consider the following 282-residue polypeptide: Large ribosomal subunit protein uL2 (282 aa).

Disordered regions lie at residues 26-55 and 218-266; these read KKSP…RHRG and PHVR…HNKS. The segment covering 34–43 has biased composition (polar residues); sequence LESQSHTAGR. The span at 254 to 266 shows a compositional bias: basic residues; that stretch reads TIGKKTRNKHNKS.

The protein belongs to the universal ribosomal protein uL2 family. In terms of assembly, part of the 50S ribosomal subunit. Forms a bridge to the 30S subunit in the 70S ribosome.

Its function is as follows. One of the primary rRNA binding proteins. Required for association of the 30S and 50S subunits to form the 70S ribosome, for tRNA binding and peptide bond formation. It has been suggested to have peptidyltransferase activity; this is somewhat controversial. Makes several contacts with the 16S rRNA in the 70S ribosome. This Pediococcus pentosaceus (strain ATCC 25745 / CCUG 21536 / LMG 10740 / 183-1w) protein is Large ribosomal subunit protein uL2.